A 179-amino-acid polypeptide reads, in one-letter code: ATP synthase subunit delta (179 aa).

Belongs to the ATPase delta chain family. As to quaternary structure, F-type ATPases have 2 components, F(1) - the catalytic core - and F(0) - the membrane proton channel. F(1) has five subunits: alpha(3), beta(3), gamma(1), delta(1), epsilon(1). F(0) has three main subunits: a(1), b(2) and c(10-14). The alpha and beta chains form an alternating ring which encloses part of the gamma chain. F(1) is attached to F(0) by a central stalk formed by the gamma and epsilon chains, while a peripheral stalk is formed by the delta and b chains.

The protein localises to the cell inner membrane. F(1)F(0) ATP synthase produces ATP from ADP in the presence of a proton or sodium gradient. F-type ATPases consist of two structural domains, F(1) containing the extramembraneous catalytic core and F(0) containing the membrane proton channel, linked together by a central stalk and a peripheral stalk. During catalysis, ATP synthesis in the catalytic domain of F(1) is coupled via a rotary mechanism of the central stalk subunits to proton translocation. In terms of biological role, this protein is part of the stalk that links CF(0) to CF(1). It either transmits conformational changes from CF(0) to CF(1) or is implicated in proton conduction. In Paraburkholderia phymatum (strain DSM 17167 / CIP 108236 / LMG 21445 / STM815) (Burkholderia phymatum), this protein is ATP synthase subunit delta.